We begin with the raw amino-acid sequence, 228 residues long: Ribulose-phosphate 3-epimerase-like protein 1 (228 aa).

Residue Ser-10 coordinates substrate. Residues His-35, Asp-37, and His-70 each coordinate a divalent metal cation. The active-site Proton acceptor is the Asp-37. Residues His-70, 146-149, 175-177, and 197-198 contribute to the substrate site; these read GFGE, DGG, and GS. Residue Asp-175 participates in a divalent metal cation binding. Asp-175 acts as the Proton donor in catalysis.

This sequence belongs to the ribulose-phosphate 3-epimerase family. As to quaternary structure, homodimer. Fe(2+) serves as cofactor. It depends on Mn(2+) as a cofactor. Zn(2+) is required as a cofactor. Requires Co(2+) as cofactor.

It carries out the reaction D-ribulose 5-phosphate = D-xylulose 5-phosphate. Its pathway is carbohydrate degradation. Functionally, catalyzes the reversible epimerization of D-ribulose 5-phosphate to D-xylulose 5-phosphate. The protein is Ribulose-phosphate 3-epimerase-like protein 1 (RPEL1) of Homo sapiens (Human).